Reading from the N-terminus, the 350-residue chain is Alcohol dehydrogenase 1 (350 aa).

Cysteine 46, histidine 69, cysteine 100, cysteine 103, cysteine 106, cysteine 114, and cysteine 156 together coordinate Zn(2+). NAD(+) is bound by residues 180–186 (GAAGGLG), aspartate 204, lysine 209, 271–273 (VGL), and arginine 343.

It belongs to the zinc-containing alcohol dehydrogenase family. As to quaternary structure, homotetramer. The cofactor is Zn(2+).

It localises to the cytoplasm. It carries out the reaction a primary alcohol + NAD(+) = an aldehyde + NADH + H(+). It catalyses the reaction a secondary alcohol + NAD(+) = a ketone + NADH + H(+). The sequence is that of Alcohol dehydrogenase 1 (ADH1) from Kluyveromyces lactis (strain ATCC 8585 / CBS 2359 / DSM 70799 / NBRC 1267 / NRRL Y-1140 / WM37) (Yeast).